We begin with the raw amino-acid sequence, 946 residues long: Probable inactive ATP-dependent zinc metalloprotease FTSHI 1, chloroplastic (946 aa).

A chloroplast-targeting transit peptide spans Met1–Cys54. A run of 3 helical transmembrane segments spans residues Ala289 to Val309, Val320 to Leu340, and Val369 to Leu389. Gly470 to Thr477 is an ATP binding site.

In the N-terminal section; belongs to the AAA ATPase family. It in the C-terminal section; belongs to the peptidase M41 family. In terms of assembly, oligomer.

Its subcellular location is the plastid. It localises to the chloroplast inner membrane. Functionally, functions in chloroplast biogenesis and chloroplast division. Required for plastid development during embryogenesis. Might be involved in chaperone functions or play a structural role in the thylakoid FtsH complex. This Arabidopsis thaliana (Mouse-ear cress) protein is Probable inactive ATP-dependent zinc metalloprotease FTSHI 1, chloroplastic.